A 1162-amino-acid polypeptide reads, in one-letter code: Sialidase (1162 aa).

BNR repeat units follow at residues 23 to 34 (KYSVDDGETWET), 163 to 174 (FYSEDDGKTWKF), and 209 to 220 (YESSDMEKPWVE). N-linked (GlcNAc...) asparagine glycosylation is found at N342 and N394. The disordered stretch occupies residues 587–1123 (HMDSSSDSSA…STPSTPAGSS (537 aa)). Residues 589-615 (DSSSDSSAHSTPSTPADSSAHSTPSTP) show a composition bias toward low complexity. The tract at residues 589–1120 (DSSSDSSAHS…SAHSTPSTPA (532 aa)) is 44 X 12 AA tandem repeats, LTR domain. 2 stretches are compositionally biased toward polar residues: residues 616–689 (VDSS…TPVD) and 699–1123 (PADS…AGSS). The N-linked (GlcNAc...) asparagine glycan is linked to N1125.

It belongs to the glycosyl hydrolase 33 family.

It localises to the cell membrane. The catalysed reaction is Hydrolysis of alpha-(2-&gt;3)-, alpha-(2-&gt;6)-, alpha-(2-&gt;8)- glycosidic linkages of terminal sialic acid residues in oligosaccharides, glycoproteins, glycolipids, colominic acid and synthetic substrates.. Its function is as follows. Developmentally regulated neuraminidase implicated in parasite invasion of cells. This Trypanosoma cruzi protein is Sialidase (TCNA).